The primary structure comprises 124 residues: p53-regulated apoptosis-inducing protein 1 (124 aa).

A compositionally biased stretch (polar residues) spans 1–16 (MGSSSEASFRSAQASC). The segment at 1–46 (MGSSSEASFRSAQASCSGARRQGLGRGDQNLSVMPPNGRAQTHTPG) is disordered.

As to expression, only found to be expressed in thymus.

The protein localises to the mitochondrion. May play an important role in mediating p53/TP53-dependent apoptosis. The chain is p53-regulated apoptosis-inducing protein 1 (TP53AIP1) from Homo sapiens (Human).